The following is a 704-amino-acid chain: Polyribonucleotide nucleotidyltransferase (704 aa).

Asp487 and Asp493 together coordinate Mg(2+). In terms of domain architecture, KH spans 554–613; that stretch reads PRLLTIKIHPDKIREVIGKGGSTIQAITKETGTQIDIQDDGTIIIASVNAIAAQAAKSRI. The region spanning 623–691 is the S1 motif domain; the sequence is GRIYEGKVAK…KQGRIRLSIK (69 aa).

The protein belongs to the polyribonucleotide nucleotidyltransferase family. Component of the RNA degradosome, which is a multiprotein complex involved in RNA processing and mRNA degradation. Mg(2+) is required as a cofactor.

The protein resides in the cytoplasm. It catalyses the reaction RNA(n+1) + phosphate = RNA(n) + a ribonucleoside 5'-diphosphate. Its function is as follows. Involved in mRNA degradation. Catalyzes the phosphorolysis of single-stranded polyribonucleotides processively in the 3'- to 5'-direction. The chain is Polyribonucleotide nucleotidyltransferase from Xanthomonas axonopodis pv. citri (strain 306).